Here is a 242-residue protein sequence, read N- to C-terminus: uncharacterized protein (242 aa).

8-15 (TGASGGIG) is an NADP(+) binding site. Serine 137 contributes to the substrate binding site. The Proton acceptor role is filled by tyrosine 150.

This sequence belongs to the short-chain dehydrogenases/reductases (SDR) family.

This is an uncharacterized protein from Bacillus subtilis (strain 168).